A 454-amino-acid polypeptide reads, in one-letter code: tRNA modification GTPase MnmE (454 aa).

The (6S)-5-formyl-5,6,7,8-tetrahydrofolate site is built by arginine 23, glutamate 80, and lysine 120. The TrmE-type G domain maps to 216-377 (GMKVVIAGRP…LRNHLKQSMG (162 aa)). K(+) is bound at residue asparagine 226. GTP-binding positions include 226–231 (NAGKSS), 245–251 (TDIAGTT), 270–273 (DTAG), 335–338 (NKAD), and 358–360 (SAR). Residue serine 230 participates in Mg(2+) binding. K(+)-binding residues include threonine 245, isoleucine 247, and threonine 250. Mg(2+) is bound at residue threonine 251. Residue lysine 454 coordinates (6S)-5-formyl-5,6,7,8-tetrahydrofolate.

This sequence belongs to the TRAFAC class TrmE-Era-EngA-EngB-Septin-like GTPase superfamily. TrmE GTPase family. In terms of assembly, homodimer. Heterotetramer of two MnmE and two MnmG subunits. The cofactor is K(+).

The protein localises to the cytoplasm. Functionally, exhibits a very high intrinsic GTPase hydrolysis rate. Involved in the addition of a carboxymethylaminomethyl (cmnm) group at the wobble position (U34) of certain tRNAs, forming tRNA-cmnm(5)s(2)U34. This Shigella sonnei (strain Ss046) protein is tRNA modification GTPase MnmE.